The following is a 490-amino-acid chain: Tegument protein VP16 (490 aa).

Residues 12-35 (MNADGASPPPPRPAGGPKNTPAAP) are disordered. A phosphoserine mark is found at Ser-18, Ser-353, Ser-411, and Ser-452. A transcriptional activation region spans residues 411 to 490 (STAPPTDVSL…DALGIDEYGG (80 aa)).

It belongs to the herpesviridae tegument protein VP16 protein family. As to quaternary structure, interacts with tegument protein VP22. Interacts with gH (via C-terminus). Interacts with the virion host shutoff protein (vhs). Interacts with VP11/12. Associates with the VP16-induced complex; binding to host HCFC1 activates VP16 for association with the octamer motif-binding host protein POU2F1, to form a multiprotein-DNA complex responsible for activating transcription of the viral immediate early genes. Interacts with host P-TEFb; this interaction recruits P-TEFb to the viral alpha-gene promoters and overcomes transcriptional inhibition by ICP22 and promotes transcription of IE genes.

The protein resides in the virion tegument. Its subcellular location is the host nucleus. In the early stage of viral replication, acts as a transcriptional activator of immediate-early (IE) gene products (alpha-genes), which is released by invading virions. Recruits P-TEFb to the viral alpha-gene promoters and overcomes transcriptional inhibition by ICP22 to promote transcription of IE genes. VP16-induced complex represents a regulatory switch: when it is on, it promotes IE-gene expression and thus lytic infection, and when it is off, it limits IE-gene transcription favoring latent infection. Acts as a key activator of lytic infection by initiating the lytic program through the assembly of the transcriptional regulatory VP16-induced complex composed of VP16 and two cellular factors, HCFC1 and POU2F1. This complex recognizes the core motif 'TAATGARAT' in alpha-gene promoters. In the late stage of viral replication, VP16, as a tegument, is involved in viral assembly. In terms of biological role, may play a role in the aggregation of tegument proteins around nucleocapsids during virus morphogenesis. The sequence is that of Tegument protein VP16 from Human herpesvirus 1 (strain 17) (HHV-1).